We begin with the raw amino-acid sequence, 237 residues long: Opacity protein opA57 (237 aa).

Ala-1 is a signal peptide.

This sequence belongs to the opacity porin family.

It is found in the cell outer membrane. Its function is as follows. Implicated in a number of adherence functions. OPA proteins are implicated in pathogenesis and are subject to phase variation. The protein is Opacity protein opA57 (opaK) of Neisseria gonorrhoeae.